Here is a 319-residue protein sequence, read N- to C-terminus: Phosphoenolpyruvate transferase (319 aa).

Asp-50 serves as a coordination point for 7,8-didemethyl-8-hydroxy-5-deazariboflavin.

Belongs to the CofD family. As to quaternary structure, homodimer. It depends on Mg(2+) as a cofactor.

The catalysed reaction is enolpyruvoyl-2-diphospho-5'-guanosine + 7,8-didemethyl-8-hydroxy-5-deazariboflavin = dehydro coenzyme F420-0 + GMP + H(+). It functions in the pathway cofactor biosynthesis; coenzyme F420 biosynthesis. In terms of biological role, catalyzes the transfer of the phosphoenolpyruvate moiety from enoylpyruvoyl-2-diphospho-5'-guanosine (EPPG) to 7,8-didemethyl-8-hydroxy-5-deazariboflavin (FO) with the formation of dehydro coenzyme F420-0 and GMP. The protein is Phosphoenolpyruvate transferase of Streptomyces avermitilis (strain ATCC 31267 / DSM 46492 / JCM 5070 / NBRC 14893 / NCIMB 12804 / NRRL 8165 / MA-4680).